The chain runs to 82 residues: ATP synthase subunit c (82 aa).

The next 2 helical transmembrane spans lie at 7–27 (FVAL…CIGI) and 53–73 (FLLA…AMMF).

It belongs to the ATPase C chain family. As to quaternary structure, F-type ATPases have 2 components, F(1) - the catalytic core - and F(0) - the membrane proton channel. F(1) has five subunits: alpha(3), beta(3), gamma(1), delta(1), epsilon(1). F(0) has three main subunits: a(1), b(2) and c(10-14). The alpha and beta chains form an alternating ring which encloses part of the gamma chain. F(1) is attached to F(0) by a central stalk formed by the gamma and epsilon chains, while a peripheral stalk is formed by the delta and b chains.

It is found in the cell inner membrane. Its function is as follows. F(1)F(0) ATP synthase produces ATP from ADP in the presence of a proton or sodium gradient. F-type ATPases consist of two structural domains, F(1) containing the extramembraneous catalytic core and F(0) containing the membrane proton channel, linked together by a central stalk and a peripheral stalk. During catalysis, ATP synthesis in the catalytic domain of F(1) is coupled via a rotary mechanism of the central stalk subunits to proton translocation. In terms of biological role, key component of the F(0) channel; it plays a direct role in translocation across the membrane. A homomeric c-ring of between 10-14 subunits forms the central stalk rotor element with the F(1) delta and epsilon subunits. This chain is ATP synthase subunit c, found in Polaromonas sp. (strain JS666 / ATCC BAA-500).